The primary structure comprises 484 residues: MLPHTISEIISGLRDKQFSSREITQDYLARIKRLNPELNCFITVTEDLALSQAEQADARLNAGQTSVLNGVPLAHKDVFCTEGVTTTCGSRMLEKFVPPYESTVTRKFIDAGAVTLGKTNMDEFAMGSSNENSYFGPVRNPWDTERAPGGSSGGSAAAVAAGLCAAATGTDTGGSIRQPAAFCGLTGLKPTYGRVSRLGMVAFASSLDQGGPFARTAEDAALLLNVMAGHDPMDSTSALNPTEDYTSALAQPLAGVTIGLPKEYFSNQLNAEVEKALQEAIKVYESLGASFKEVSLPHTELSVPAYYVIAPAECSTNLSRFDGVRYGHRCENPKDLEDLYQRSRSEGFGDEVKRRILIGTYALSAGYYDAYYRQAQKIRRLIKNDFVSALNEVDALLCPTTPDVAFRLGEKTSDPVQMYLEDIFTIPASLAGLPALGLPCGFKGGLPVGMQLIGNYFTEARLLNLGHQYQLNTDWHKRSPALGE.

Residues Lys76 and Ser151 each act as charge relay system in the active site. The active-site Acyl-ester intermediate is the Ser175.

Belongs to the amidase family. GatA subfamily. Heterotrimer of A, B and C subunits.

The enzyme catalyses L-glutamyl-tRNA(Gln) + L-glutamine + ATP + H2O = L-glutaminyl-tRNA(Gln) + L-glutamate + ADP + phosphate + H(+). In terms of biological role, allows the formation of correctly charged Gln-tRNA(Gln) through the transamidation of misacylated Glu-tRNA(Gln) in organisms which lack glutaminyl-tRNA synthetase. The reaction takes place in the presence of glutamine and ATP through an activated gamma-phospho-Glu-tRNA(Gln). In Hahella chejuensis (strain KCTC 2396), this protein is Glutamyl-tRNA(Gln) amidotransferase subunit A.